Reading from the N-terminus, the 613-residue chain is MSPSAPEQKPQLQQQQQQQQQGSSSGDSSSGSVNDSKSVTPAPSATSSTSQSSTAPSTSSDDNLICRWNACNQKFPAPEALYEHICERHVGRKSTNNLNLTCQWNSCRTTTVKRDHITSHIRVHVPLKPHKCEFCGKSFKRPQDLKKHVKTHADDSVLVRPSQDPQGGLNYRPQPPKGPSSYYDHTGQMRTNAAAFAHQAGHPSGGYYAPQPSTNYGLYFNQPPINNARTEHLGYSAAAGGYDRKRTYDMVDDFFGSAKRRQIDPSSYAQIGRSLMPLHGNLSVPNGPMTATEQYMPQPAPAPVHAGPTPSQNPLAQQYYLPMPSARTQKDLIHIDTILGQMQDTIYENANHATAGVHIHHAENGFNGYRNTPSPPTSHRSPTGMHVGADGYQPVSAASMASPMTAISSTGTPAVTPPSSSMSYTSGHSPSPSSSAMSPQSRHGSTASVMYPTLPTSLPAVSQGFGHSATTTLGPSFDGSERRRYSGGMLQRARAGPLPLPHEDTSGASTPKASESALSVGSPSSESDVSDATREREEQYDRWLENMRVIETLREYVRGRLERKEFVEDNESPQSSHSDAMDVDPKSPQAPPRELGTPREGSSLYPILRMPGA.

The interval 1-61 (MSPSAPEQKP…SSTAPSTSSD (61 aa)) is disordered. Residues 11–60 (QLQQQQQQQQQGSSSGDSSSGSVNDSKSVTPAPSATSSTSQSSTAPSTSS) show a composition bias toward low complexity. 3 C2H2-type zinc fingers span residues 64–89 (LICR…CERH), 100–124 (LTCQ…IRVH), and 130–152 (HKCE…VKTH). Residues 146–157 (KKHVKTHADDSV) show a composition bias toward basic and acidic residues. 4 disordered regions span residues 146 to 186 (KKHV…YDHT), 371 to 391 (NTPS…GADG), 406 to 535 (AISS…ATRE), and 565 to 613 (EFVE…MPGA). Low complexity predominate over residues 417–441 (PPSSSMSYTSGHSPSPSSSAMSPQS). Composition is skewed to polar residues over residues 442 to 460 (RHGS…SLPA) and 506 to 517 (SGASTPKASESA). Residues 451-454 (YPTL) carry the YPX[LI] motif 1 motif. Residues 605-608 (YPIL) carry the YPX[LI] motif 2 motif.

This sequence belongs to the pacC/RIM101 family. In terms of assembly, binds to DNA. Activated by C-terminal proteolytic cleavage by signaling protease (probably palB/RIM13) at neutral to alkaline ambient pH.

It localises to the cytoplasm. The protein localises to the nucleus. In terms of biological role, transcription factor that mediates regulation of both acid- and alkaline-expressed genes in response to ambient pH. At alkaline ambient pH, activates transcription of alkaline-expressed genes (including PAC1 itself) and represses transcription of acid-expressed genes. The protein is pH-response transcription factor pacC/RIM101 (PAC1) of Gibberella moniliformis (Maize ear and stalk rot fungus).